Reading from the N-terminus, the 107-residue chain is Nucleoid-associated protein BT_0257 (107 aa).

Belongs to the YbaB/EbfC family. Homodimer.

The protein localises to the cytoplasm. It is found in the nucleoid. Binds to DNA and alters its conformation. May be involved in regulation of gene expression, nucleoid organization and DNA protection. The polypeptide is Nucleoid-associated protein BT_0257 (Bartonella tribocorum (strain CIP 105476 / IBS 506)).